We begin with the raw amino-acid sequence, 314 residues long: 4-hydroxy-3-methylbut-2-enyl diphosphate reductase (314 aa).

Cys-12 provides a ligand contact to [4Fe-4S] cluster. Residues His-41 and His-74 each contribute to the (2E)-4-hydroxy-3-methylbut-2-enyl diphosphate site. Residues His-41 and His-74 each contribute to the dimethylallyl diphosphate site. Residues His-41 and His-74 each contribute to the isopentenyl diphosphate site. Cys-96 serves as a coordination point for [4Fe-4S] cluster. His-124 serves as a coordination point for (2E)-4-hydroxy-3-methylbut-2-enyl diphosphate. His-124 contacts dimethylallyl diphosphate. His-124 serves as a coordination point for isopentenyl diphosphate. Residue Glu-126 is the Proton donor of the active site. Thr-167 contacts (2E)-4-hydroxy-3-methylbut-2-enyl diphosphate. Cys-197 contacts [4Fe-4S] cluster. Residues Ser-225, Ser-226, Asn-227, and Ser-269 each contribute to the (2E)-4-hydroxy-3-methylbut-2-enyl diphosphate site. 4 residues coordinate dimethylallyl diphosphate: Ser-225, Ser-226, Asn-227, and Ser-269. Isopentenyl diphosphate is bound by residues Ser-225, Ser-226, Asn-227, and Ser-269.

It belongs to the IspH family. [4Fe-4S] cluster is required as a cofactor.

The catalysed reaction is isopentenyl diphosphate + 2 oxidized [2Fe-2S]-[ferredoxin] + H2O = (2E)-4-hydroxy-3-methylbut-2-enyl diphosphate + 2 reduced [2Fe-2S]-[ferredoxin] + 2 H(+). It carries out the reaction dimethylallyl diphosphate + 2 oxidized [2Fe-2S]-[ferredoxin] + H2O = (2E)-4-hydroxy-3-methylbut-2-enyl diphosphate + 2 reduced [2Fe-2S]-[ferredoxin] + 2 H(+). Its pathway is isoprenoid biosynthesis; dimethylallyl diphosphate biosynthesis; dimethylallyl diphosphate from (2E)-4-hydroxy-3-methylbutenyl diphosphate: step 1/1. It participates in isoprenoid biosynthesis; isopentenyl diphosphate biosynthesis via DXP pathway; isopentenyl diphosphate from 1-deoxy-D-xylulose 5-phosphate: step 6/6. Functionally, catalyzes the conversion of 1-hydroxy-2-methyl-2-(E)-butenyl 4-diphosphate (HMBPP) into a mixture of isopentenyl diphosphate (IPP) and dimethylallyl diphosphate (DMAPP). Acts in the terminal step of the DOXP/MEP pathway for isoprenoid precursor biosynthesis. This Idiomarina loihiensis (strain ATCC BAA-735 / DSM 15497 / L2-TR) protein is 4-hydroxy-3-methylbut-2-enyl diphosphate reductase.